A 356-amino-acid polypeptide reads, in one-letter code: Protein pelota homolog (356 aa).

It belongs to the eukaryotic release factor 1 family. Pelota subfamily. As to quaternary structure, monomer. Requires a divalent metal cation as cofactor.

Its subcellular location is the cytoplasm. Its function is as follows. May function in recognizing stalled ribosomes, interact with stem-loop structures in stalled mRNA molecules, and effect endonucleolytic cleavage of the mRNA. May play a role in the release non-functional ribosomes and degradation of damaged mRNAs. Has endoribonuclease activity. The protein is Protein pelota homolog of Desulfurococcus amylolyticus (strain DSM 18924 / JCM 16383 / VKM B-2413 / 1221n) (Desulfurococcus kamchatkensis).